The chain runs to 378 residues: Carbamoyl phosphate synthase small chain (378 aa).

Positions 1-189 (MTKPAILALA…DSHPEIAASE (189 aa)) are CPSase. L-glutamine-binding residues include Ser-47, Gly-241, and Gly-243. A Glutamine amidotransferase type-1 domain is found at 193 to 378 (HVVAYDYGVK…RFIDAMAKRR (186 aa)). The active-site Nucleophile is the Cys-269. 5 residues coordinate L-glutamine: Leu-270, Gln-273, Asn-311, Gly-313, and Phe-314. Residues His-353 and Glu-355 contribute to the active site.

Belongs to the CarA family. Composed of two chains; the small (or glutamine) chain promotes the hydrolysis of glutamine to ammonia, which is used by the large (or ammonia) chain to synthesize carbamoyl phosphate. Tetramer of heterodimers (alpha,beta)4.

The catalysed reaction is hydrogencarbonate + L-glutamine + 2 ATP + H2O = carbamoyl phosphate + L-glutamate + 2 ADP + phosphate + 2 H(+). It carries out the reaction L-glutamine + H2O = L-glutamate + NH4(+). The protein operates within amino-acid biosynthesis; L-arginine biosynthesis; carbamoyl phosphate from bicarbonate: step 1/1. It functions in the pathway pyrimidine metabolism; UMP biosynthesis via de novo pathway; (S)-dihydroorotate from bicarbonate: step 1/3. Functionally, small subunit of the glutamine-dependent carbamoyl phosphate synthetase (CPSase). CPSase catalyzes the formation of carbamoyl phosphate from the ammonia moiety of glutamine, carbonate, and phosphate donated by ATP, constituting the first step of 2 biosynthetic pathways, one leading to arginine and/or urea and the other to pyrimidine nucleotides. The small subunit (glutamine amidotransferase) binds and cleaves glutamine to supply the large subunit with the substrate ammonia. This Pseudomonas syringae pv. tomato (strain ATCC BAA-871 / DC3000) protein is Carbamoyl phosphate synthase small chain.